A 462-amino-acid chain; its full sequence is MKSSTREQTPVTSPTPHDPTPPTPPRGSTPLFSRGSWLETRRITDVLRKETIGGALLLLGTVVALVWANSPWSSSYAGLRDTVIAPSLLHPLHLDLTLGQWAADGLLAIFFFIAGLELKREFVAGDLRDPRRALVPVAAAVGGMAVPAVVYVLVARSAGDGALNGWAIPTATDIAFAVAVLAVISTHLPTALRTFLLTLAVVDDLLAITIIAIFYTDTLAVLPLLGALAVIAVFGLLVQKRIRSWWLLIPLAVVAWALMHASGIHATVAGVLLGFTVPVLRSRAAGGPEAGPGMAEHFEHVWRPLSAGFAVPVFAFFSAGVTVGGLSGLVDSLQDRVALGIVAGLVVGKAAGILGATAAVSRFTRARLDPSLSWWDVLGASLLGGIGFTVSLLIGELAFGAGSVRDEHVKVGVLTGSLLAAALAAVVLRARNRVYRRLHEAERVDEDADGVPDVYQAPRLNG.

Residues 1–31 (MKSSTREQTPVTSPTPHDPTPPTPPRGSTPL) form a disordered region. Pro residues predominate over residues 16–27 (PHDPTPPTPPRG). The next 11 helical transmembrane spans lie at 52–72 (IGGA…NSPW), 96–116 (LTLG…IAGL), 134–154 (LVPV…YVLV), 165–185 (GWAI…AVIS), 195–215 (FLLT…AIFY), 218–238 (TLAV…GLLV), 244–264 (SWWL…ASGI), 309–329 (FAVP…LSGL), 337–357 (VALG…LGAT), 382–402 (LLGG…FGAG), and 408–428 (HVKV…AVVL).

Belongs to the NhaA Na(+)/H(+) (TC 2.A.33) antiporter family.

The protein localises to the cell membrane. It carries out the reaction Na(+)(in) + 2 H(+)(out) = Na(+)(out) + 2 H(+)(in). In terms of biological role, na(+)/H(+) antiporter that extrudes sodium in exchange for external protons. The chain is Na(+)/H(+) antiporter NhaA 2 from Kineococcus radiotolerans (strain ATCC BAA-149 / DSM 14245 / SRS30216).